The chain runs to 428 residues: Phosphoglucosamine mutase (428 aa).

Ser-96 functions as the Phosphoserine intermediate in the catalytic mechanism. Positions 96, 229, 231, and 233 each coordinate Mg(2+). A Phosphoserine modification is found at Ser-96.

The protein belongs to the phosphohexose mutase family. It depends on Mg(2+) as a cofactor. Post-translationally, activated by phosphorylation.

The enzyme catalyses alpha-D-glucosamine 1-phosphate = D-glucosamine 6-phosphate. In terms of biological role, catalyzes the conversion of glucosamine-6-phosphate to glucosamine-1-phosphate. This is Phosphoglucosamine mutase from Thermotoga neapolitana (strain ATCC 49049 / DSM 4359 / NBRC 107923 / NS-E).